The sequence spans 819 residues: DNA topoisomerase 4 subunit A (819 aa).

The Topo IIA-type catalytic domain maps to 30 to 496; sequence LPDIRDGLKP…QIIEIDTASL (467 aa). Catalysis depends on Tyr118, which acts as the O-(5'-phospho-DNA)-tyrosine intermediate.

This sequence belongs to the type II topoisomerase GyrA/ParC subunit family. ParC type 2 subfamily. In terms of assembly, heterotetramer composed of ParC and ParE.

Its subcellular location is the cell membrane. The catalysed reaction is ATP-dependent breakage, passage and rejoining of double-stranded DNA.. Its function is as follows. Topoisomerase IV is essential for chromosome segregation. It relaxes supercoiled DNA. Performs the decatenation events required during the replication of a circular DNA molecule. The chain is DNA topoisomerase 4 subunit A from Streptococcus pyogenes serotype M3 (strain ATCC BAA-595 / MGAS315).